We begin with the raw amino-acid sequence, 514 residues long: 2-isopropylmalate synthase (514 aa).

A Pyruvate carboxyltransferase domain is found at 5 to 267; the sequence is LIIFDTTLRD…HTDIETREIV (263 aa). Aspartate 14, histidine 202, histidine 204, and asparagine 238 together coordinate Mn(2+). The segment at 393–514 is regulatory domain; sequence KLVALRVCSE…QRTHPQVGDV (122 aa).

It belongs to the alpha-IPM synthase/homocitrate synthase family. LeuA type 1 subfamily. Homodimer. Mn(2+) is required as a cofactor.

Its subcellular location is the cytoplasm. The catalysed reaction is 3-methyl-2-oxobutanoate + acetyl-CoA + H2O = (2S)-2-isopropylmalate + CoA + H(+). The protein operates within amino-acid biosynthesis; L-leucine biosynthesis; L-leucine from 3-methyl-2-oxobutanoate: step 1/4. Catalyzes the condensation of the acetyl group of acetyl-CoA with 3-methyl-2-oxobutanoate (2-ketoisovalerate) to form 3-carboxy-3-hydroxy-4-methylpentanoate (2-isopropylmalate). The chain is 2-isopropylmalate synthase from Methylococcus capsulatus (strain ATCC 33009 / NCIMB 11132 / Bath).